The chain runs to 255 residues: Imidazole glycerol phosphate synthase subunit HisF (255 aa).

Catalysis depends on residues Asp12 and Asp131.

Belongs to the HisA/HisF family. As to quaternary structure, heterodimer of HisH and HisF.

The protein localises to the cytoplasm. It carries out the reaction 5-[(5-phospho-1-deoxy-D-ribulos-1-ylimino)methylamino]-1-(5-phospho-beta-D-ribosyl)imidazole-4-carboxamide + L-glutamine = D-erythro-1-(imidazol-4-yl)glycerol 3-phosphate + 5-amino-1-(5-phospho-beta-D-ribosyl)imidazole-4-carboxamide + L-glutamate + H(+). The protein operates within amino-acid biosynthesis; L-histidine biosynthesis; L-histidine from 5-phospho-alpha-D-ribose 1-diphosphate: step 5/9. Its function is as follows. IGPS catalyzes the conversion of PRFAR and glutamine to IGP, AICAR and glutamate. The HisF subunit catalyzes the cyclization activity that produces IGP and AICAR from PRFAR using the ammonia provided by the HisH subunit. The protein is Imidazole glycerol phosphate synthase subunit HisF of Zymomonas mobilis subsp. mobilis (strain ATCC 31821 / ZM4 / CP4).